Reading from the N-terminus, the 1417-residue chain is Non-structural polyprotein 1AB (1417 aa).

Positions 105–143 (KLIHKANALQERLRLSQEEKATLALDVQFLQHENVRLKE) form a coiled coil. A run of 5 helical transmembrane segments spans residues 155–175 (MKWIIVGAVLTFLSLIPGGYA), 240–260 (VFYYIHYYEMWNIFMFVLAIG), 287–307 (VLPTIPFHTTMTLWVMNTLMV), 314–334 (LLAITMAILAPILGIIFLCFM), and 345–365 (GLIATAVLIAGGHACLTLTGT). Active-site charge relay system; for serine protease activity residues include His462, Asp490, and Ser552. The stretch at 588–615 (VKAPSQVELLKEEIERLKAQLNSAAENP) forms a coiled coil. Position 694 is an O-(5'-phospho-RNA)-tyrosine (Tyr694). The disordered stretch occupies residues 753 to 813 (NFDQAKPTPA…QKIEPQPYSQ (61 aa)). The span at 784-796 (SQKKEKQPEHEQQ) shows a compositional bias: basic and acidic residues. One can recognise a RdRp catalytic domain in the interval 1162-1288 (KHFIEFDWTR…TTPSVPDNYE (127 aa)).

Belongs to the astroviridae polyprotein 1AB family. Monomer. Cleaved by the viral and host proteases. The protease is probably autocatalytically cleaved.

The protein resides in the host membrane. It carries out the reaction RNA(n) + a ribonucleoside 5'-triphosphate = RNA(n+1) + diphosphate. In terms of biological role, responsible for the cleavage of the polyprotein into functional products. Functionally, protein covalently attached to the 5' extremity of the genomic and subgenomic RNAs. It may serve as a primer for the replicase. This is Non-structural polyprotein 1AB (ORF1) from Human astrovirus-8 (HAstV-8).